Here is a 604-residue protein sequence, read N- to C-terminus: UvrABC system protein C (604 aa).

The 78-residue stretch at 14-91 (ESPGVYRMLD…IKEQRPPYNI (78 aa)) folds into the GIY-YIG domain. One can recognise a UVR domain in the interval 202–237 (EQVTAQLTRDMETASQALDFEEAARLRDQIQQLRRL). The segment at 538-557 (GHRQQRDKQRRTSTLQDIPG) is disordered.

This sequence belongs to the UvrC family. As to quaternary structure, interacts with UvrB in an incision complex.

Its subcellular location is the cytoplasm. The UvrABC repair system catalyzes the recognition and processing of DNA lesions. UvrC both incises the 5' and 3' sides of the lesion. The N-terminal half is responsible for the 3' incision and the C-terminal half is responsible for the 5' incision. The protein is UvrABC system protein C of Chromohalobacter salexigens (strain ATCC BAA-138 / DSM 3043 / CIP 106854 / NCIMB 13768 / 1H11).